Consider the following 81-residue polypeptide: Sulfur carrier protein TusA (81 aa).

C19 functions as the Cysteine persulfide intermediate in the catalytic mechanism.

The protein belongs to the sulfur carrier protein TusA family.

The protein localises to the cytoplasm. Its function is as follows. Sulfur carrier protein which probably makes part of a sulfur-relay system. The protein is Sulfur carrier protein TusA of Vibrio vulnificus (strain CMCP6).